The primary structure comprises 699 residues: Polyribonucleotide nucleotidyltransferase (699 aa).

Positions 493 and 499 each coordinate Mg(2+). The KH domain maps to 560-620 (PLIANIEIDP…NKVNQAIEYI (61 aa)). The region spanning 630–697 (GDMFEGKITR…DSGRIQLGKA (68 aa)) is the S1 motif domain.

It belongs to the polyribonucleotide nucleotidyltransferase family. It depends on Mg(2+) as a cofactor.

The protein resides in the cytoplasm. It catalyses the reaction RNA(n+1) + phosphate = RNA(n) + a ribonucleoside 5'-diphosphate. Its function is as follows. Involved in mRNA degradation. Catalyzes the phosphorolysis of single-stranded polyribonucleotides processively in the 3'- to 5'-direction. The sequence is that of Polyribonucleotide nucleotidyltransferase from Thermosipho melanesiensis (strain DSM 12029 / CIP 104789 / BI429).